We begin with the raw amino-acid sequence, 226 residues long: MNPIVINRLQRKLGYTFDQYDLLIQALTHRSASSKHNERLEFLGDSILSFVIANALYHRFPRVDEGDMSRMRATLVRGNTLAELAREFELGECLRLGPGELKSGGYRRESILADTVEALIGAIFLDSDIQSIERIILSWYETRLNEISPGDKQKDPKTRLQEYLQGHHLPLPSYLVVMVRGEAHDQEFTIHCQVSGIEQPVKGTGSSRRKAEQAAAEQALKQLELE.

The RNase III domain occupies 6-128 (INRLQRKLGY…LIGAIFLDSD (123 aa)). Glu-41 lines the Mg(2+) pocket. Residue Asp-45 is part of the active site. The Mg(2+) site is built by Asp-114 and Glu-117. Glu-117 is a catalytic residue. The DRBM domain maps to 155–225 (DPKTRLQEYL…AEQALKQLEL (71 aa)).

It belongs to the ribonuclease III family. Homodimer. Mg(2+) serves as cofactor.

Its subcellular location is the cytoplasm. It carries out the reaction Endonucleolytic cleavage to 5'-phosphomonoester.. In terms of biological role, digests double-stranded RNA. Involved in the processing of primary rRNA transcript to yield the immediate precursors to the large and small rRNAs (23S and 16S). Processes some mRNAs, and tRNAs when they are encoded in the rRNA operon. Processes pre-crRNA and tracrRNA of type II CRISPR loci if present in the organism. The polypeptide is Ribonuclease 3 (Photorhabdus laumondii subsp. laumondii (strain DSM 15139 / CIP 105565 / TT01) (Photorhabdus luminescens subsp. laumondii)).